The following is a 379-amino-acid chain: Stimulator of interferon genes protein (379 aa).

Residues 1–17 (MPHSSLHPSIPCPRGHG) are Cytoplasmic-facing. The tract at residues 1–190 (MPHSSLHPSI…TYNQHYNNLL (190 aa)) is mediates interaction with ZDHHC1 and ZDHHC11. Residues 18–34 (AQKAALVLLSACLVTLW) traverse the membrane as a helical segment. Residue K20 forms a Glycyl lysine isopeptide (Lys-Gly) (interchain with G-Cter in ubiquitin) linkage. The Lumenal portion of the chain corresponds to 35–44 (GLGEPPEHTL). Residues 45-69 (RYLVLHLASLQLGLLLNGVCSLAEE) traverse the membrane as a helical segment. At 70–91 (LRHIHSRYRGSYWRTVRACLGC) the chain is on the cytoplasmic side. S-palmitoyl cysteine attachment occurs at residues C88 and C91. Residues 92–106 (PLRRGALLLLSIYFY) traverse the membrane as a helical segment. Residues 107–116 (YSLPNAVGPP) lie on the Lumenal side of the membrane. The chain crosses the membrane as a helical span at residues 117–134 (FTWMLALLGLSQALNILL). The Cytoplasmic segment spans residues 135–379 (GLKGLAPAEI…KPLPLRTDFS (245 aa)). A Glycyl lysine isopeptide (Lys-Gly) (interchain with G-Cter in ubiquitin) cross-link involves residue K150. Positions 153 to 340 (FNVAHGLAWS…RHLRQEEKEE (188 aa)) are cyclic dinucleotide-binding domain (CBD). Residues S162 and Y167 each coordinate 2',3'-cGAMP. 3',3'-c-di-GMP is bound by residues S162 and Y167. Y167 contributes to the 2',3'-cUAMP binding site. T229 carries the post-translational modification Phosphothreonine. A Glycyl lysine isopeptide (Lys-Gly) (interchain with G-Cter in ubiquitin) cross-link involves residue K236. Residue R238 coordinates 2',3'-cGAMP. Residue R238 coordinates 2',3'-cUAMP. 3',3'-c-di-GMP contacts are provided by residues 238–241 (RVYS) and T263. S241 bears the Phosphoserine mark. 2',3'-cGAMP is bound at residue T263. A 2',3'-cUAMP-binding site is contributed by T263. K338 participates in a covalent cross-link: Glycyl lysine isopeptide (Lys-Gly) (interchain with G-Cter in SUMO). The tract at residues 340–379 (EVTVGSLKTSAVPSTSTMSQEPELLISGMEKPLPLRTDFS) is C-terminal tail (CTT). The interval 341-370 (VTVGSLKTSAVPSTSTMSQEPELLISGMEK) is disordered. Positions 345–359 (SLKTSAVPSTSTMSQ) are enriched in polar residues. T354 carries the phosphothreonine modification. S355 is subject to Phosphoserine; by MAP3K7. T356 carries the post-translational modification Phosphothreonine. Residues S358 and S366 each carry the phosphoserine; by TBK1 modification. Positions 363 to 366 (LLIS) match the pLxIS motif motif.

Belongs to the STING family. As to quaternary structure, homodimer; forms a homodimer in absence of cyclic nucleotide (c-di-GMP or cGAMP); 'Lys-63'-linked ubiquitination at Lys-150 is required for homodimerization. Homotetramer; in presence of cyclic nucleotide (c-di-GMP or cGAMP), forms tetramers and higher-order oligomers through side-by-side packing. Interacts (when phosphorylated) with IRF3; following activation and phosphorylation on the pLxIS motif by TBK1, recruits IRF3. Interacts with RIGI, MAVS and SSR2. Interacts with RNF5 and TRIM56. Interacts with TBK1; when homodimer, leading to subsequent production of IFN-beta. Interacts with IFIT1 and IFIT2. Interacts with TRIM29; this interaction induces STING1 ubiquitination and subsequent degradation. Associates with the MHC-II complex. Interacts with STEEP1; interaction takes place upon cGAMP-activation and STING1 phosphorylation by MAP3K7/TAK1 and promotes STING1 translocation to COPII vesicles. Interacts with SEC24A, SEC24B, and SEC24C; promoting translocation to COPII vesicles. Interacts (when ubiquitinated) with SQSTM1; leading to relocalization to autophagosomes. Interacts with SURF4. Interacts with HNRNPA2B1. Interacts with ZDHHC1; ZDHHC1 constitutively interacts with STING1 and in presence of DNA viruses activates it by promoting its cGAMP-induced oligomerization and the recruitment of downstream signaling components. Interacts with ZDHHC11; in presence of DNA viruses promotes the recruitment of IRF3 to STING1. Interacts with TOMM70. Interacts with isoform IFI16-beta of IFI16. Interacts with TAB1; promoting recruitment of TAB1 to the endoplasmic reticulum membrane and subsequent activation of MAP3K7/TAK1. Interacts (via transmembrane domain) with TMEM203. Interacts with DDX41. Interacts with TMEM120A (via C-terminal domain); regulates the trafficking of STING1 from the ER to the ER-Golgi intermediate compartment to elicit antiviral effects. In terms of assembly, (Microbial infection) Interacts with human papillomavirus (HPV) protein E7. (Microbial infection) Interacts with adenovirus early E1A protein. As to quaternary structure, (Microbial infection) Interacts with herpes simplex virus 1 protein ICP34.5; this interaction inhibits the intracellular DNA sensing pathway. In terms of assembly, (Microbial infection) Interacts with Chikungunya virus non-structural protein 1; this interaction results in inhibition of cGAS-STING signaling and increased levels of palmitoylated nsP1 and protein stabilization. (Microbial infection) Interacts with human cytomegalovirus proteins UL94, UL42 and UL138; these interactions result in the inhibition of cGAS-STING signaling. As to quaternary structure, (Microbial infection) Interacts with varivella virus protein 39; this interaction results in the inhibition of cGAS-STING signaling. In terms of processing, phosphorylation by TBK1 leads to activation and production of IFN-beta. Following cyclic nucleotide (c-di-GMP or cGAMP)-binding, activation and translocation from the endoplasmic reticulum, STING1 is phosphorylated by TBK1 at Ser-366 in the pLxIS motif. The phosphorylated pLxIS motif constitutes an IRF3-binding motif, leading to recruitment of the transcription factor IRF3 to induce type-I interferons and other cytokines. The phosphorylated pLxIS motif facilitates SENP2 recruitment during late phase of viral infection. Phosphorylated on tyrosine residues upon MHC-II aggregation. Dephosphorylation by PPP6C leads to inactivation and decreased production of IFN-beta. Phosphorylation at Ser-358 is also required to activate IRF3. Phosphorylation at Ser-355 by MAP3K7/TAK1 facilitates its interaction with STEEP1, promoting STING1 translocation to COPII vesicles. Post-translationally, ubiquitinated. Ubiquitinated via 'Lys-63'-linked ubiquitin chains in response to double-stranded DNA treatment, leading to relocalization to autophagosomes and subsequent degradation; this process is dependent on SQSTM1. 'Lys-63'-linked ubiquitination mediated by TRIM56 at Lys-150 promotes homodimerization and recruitment of the antiviral kinase TBK1 and subsequent production of IFN-beta. 'Lys-48'-linked polyubiquitination at Lys-150 occurring after viral infection is mediated by RNF5 and leads to proteasomal degradation. 'Lys-11'-linked polyubiquitination at Lys-150 by RNF26 leads to stabilize STING1: it protects STING1 from RNF5-mediated 'Lys-48'-linked polyubiquitination. 'Lys-33'-linked and 'Lys-48'-linked deubiquitinated by USP20; leading to its stabilization and promotion of innate antiviral response. 'Lys-48'-linked deubiquitinated by USP44; leading to its stabilization and promotion of innate antiviral response. Deubiquitinated by USP13; leading to inhibition of innate antiviral response. 'Lys-63'-linked deubiquitinated by USP49; leading to inhibition of the subsequent recruitment of TBK1 to the signaling complex. 'Lys-63'-linked ubiquitination mediated by RNF39 promotes the activation of the cGAS-STING pathway. MARCHF5-mediated ubiquitination prevents the oxidation-induced polymer formation. (Microbial infection) Deubiquitinated by Epstein-Barr virus BPLF1 on both 'Lys-48' and 'Lys-63'-linked ubiquitin chains; leading to inhibition of cGAS-STING signaling. In terms of processing, sumoylated at Lys-338 by TRIM38 during the early phase of viral infection, promoting its stability by preventing its relocalization to autophagosomes and subsequent degradation. Desumoylated by SENP2 during the late phase of viral infection. Post-translationally, palmitoylation takes place in the Golgi apparatus and creates a platform for the recruitment of TBK1. As to expression, ubiquitously expressed. Expressed in skin endothelial cells, alveolar type 2 pneumocytes, bronchial epithelium and alveolar macrophages.

The protein resides in the endoplasmic reticulum membrane. It localises to the cytoplasm. Its subcellular location is the perinuclear region. The protein localises to the endoplasmic reticulum-Golgi intermediate compartment membrane. It is found in the golgi apparatus membrane. The protein resides in the cytoplasmic vesicle. It localises to the autophagosome membrane. Its subcellular location is the mitochondrion outer membrane. The protein localises to the cell membrane. It catalyses the reaction H(+)(in) = H(+)(out). Its activity is regulated as follows. Activated upon binding to the hydrolysis-resistant 2'3'-cG(s)A(s)MP, an analog of cGAMP, in which phosphodiester linkages are replaced by phosphothioate linkages. Specifically inhibited by small-molecule H-151 (N-(4-ethylphenyl)-N'-1H-indol-3-yl-urea), which covalently binds Cys-91 and prevents palmitoylation and subsequent activation of STING1. In contrast to mouse protein, not activated by anticancer molecule 5,6-dimethylxanthenone 4-acetic acid (DMXAA). Inhibited by compound 18 ([(3S,4S)-2-(4-tert-butyl-3-chlorophenyl)-3-(2,3-dihydro-1,4-benzodioxin-6-yl)-7-fluoro-1-oxo-1,2,3,4-tetrahydroisoquinolin-4-yl]acetate), a competitive inhibitor with slow dissociation kinetics and good oral bioavailability. Homooligomerization and ability to promote the production of type I interferons is activated by C53, a small benzothiazinone-like compound that binds to the transmembrane regions. in the area of the putative pore. In contrast, compound C53, directly inhibits the proton channel activity and facilitate MAP1LC3B/LC3B lipidation and autophagosome formation. Its function is as follows. Facilitator of innate immune signaling that acts as a sensor of cytosolic DNA from bacteria and viruses and promotes the production of type I interferon (IFN-alpha and IFN-beta). Innate immune response is triggered in response to non-CpG double-stranded DNA from viruses and bacteria delivered to the cytoplasm. Acts by binding cyclic dinucleotides: recognizes and binds cyclic di-GMP (c-di-GMP), a second messenger produced by bacteria, cyclic UMP-AMP (2',3'-cUAMP), and cyclic GMP-AMP (cGAMP), a messenger produced by CGAS in response to DNA virus in the cytosol. Upon binding to c-di-GMP, cUAMP or cGAMP, STING1 oligomerizes, translocates from the endoplasmic reticulum and is phosphorylated by TBK1 on the pLxIS motif, leading to recruitment and subsequent activation of the transcription factor IRF3 to induce expression of type I interferon and exert a potent anti-viral state. Exhibits 2',3' phosphodiester linkage-specific ligand recognition: can bind both 2'-3' linked cGAMP (2'-3'-cGAMP) and 3'-3' linked cGAMP but is preferentially activated by 2'-3' linked cGAMP. The preference for 2'-3'-cGAMP, compared to other linkage isomers is probably due to the ligand itself, whichs adopts an organized free-ligand conformation that resembles the STING1-bound conformation and pays low energy costs in changing into the active conformation. In addition to promote the production of type I interferons, plays a direct role in autophagy. Following cGAMP-binding, STING1 buds from the endoplasmic reticulum into COPII vesicles, which then form the endoplasmic reticulum-Golgi intermediate compartment (ERGIC). The ERGIC serves as the membrane source for WIPI2 recruitment and LC3 lipidation, leading to formation of autophagosomes that target cytosolic DNA or DNA viruses for degradation by the lysosome. Promotes autophagy by acting as a proton channel that directs proton efflux from the Golgi to facilitate MAP1LC3B/LC3B lipidation. The autophagy- and interferon-inducing activities can be uncoupled and autophagy induction is independent of TBK1 phosphorylation. Autophagy is also triggered upon infection by bacteria: following c-di-GMP-binding, which is produced by live Gram-positive bacteria, promotes reticulophagy. May be involved in translocon function, the translocon possibly being able to influence the induction of type I interferons. May be involved in transduction of apoptotic signals via its association with the major histocompatibility complex class II (MHC-II). Functionally, (Microbial infection) Antiviral activity is antagonized by oncoproteins, such as papillomavirus (HPV) protein E7 and adenovirus early E1A protein. Such oncoproteins prevent the ability to sense cytosolic DNA. This chain is Stimulator of interferon genes protein, found in Homo sapiens (Human).